A 215-amino-acid chain; its full sequence is Cytochrome b6 (215 aa).

A helical membrane pass occupies residues 32–52 (IFHCLGGITLTCFLVQVATGF). Cysteine 35 contacts heme c. Heme b is bound by residues histidine 86 and histidine 100. The next 3 helical transmembrane spans lie at 90–110 (ASMMVLMMILHVFRVYLTGGF), 116–136 (LTWVTGVVLAVLTASFGVTGY), and 186–206 (LHTFVLPLLTAVFMLMHFPMI). The heme b site is built by histidine 187 and histidine 202.

It belongs to the cytochrome b family. PetB subfamily. In terms of assembly, the 4 large subunits of the cytochrome b6-f complex are cytochrome b6, subunit IV (17 kDa polypeptide, PetD), cytochrome f and the Rieske protein, while the 4 small subunits are PetG, PetL, PetM and PetN. The complex functions as a dimer. Heme b serves as cofactor. Heme c is required as a cofactor.

It localises to the plastid. The protein resides in the chloroplast thylakoid membrane. In terms of biological role, component of the cytochrome b6-f complex, which mediates electron transfer between photosystem II (PSII) and photosystem I (PSI), cyclic electron flow around PSI, and state transitions. This is Cytochrome b6 from Calycanthus floridus var. glaucus (Eastern sweetshrub).